The chain runs to 325 residues: Ferrochelatase (325 aa).

2 residues coordinate Fe cation: His-172 and Glu-267.

It belongs to the ferrochelatase family.

It is found in the cytoplasm. The enzyme catalyses heme b + 2 H(+) = protoporphyrin IX + Fe(2+). It participates in porphyrin-containing compound metabolism; protoheme biosynthesis; protoheme from protoporphyrin-IX: step 1/1. Its function is as follows. Catalyzes the ferrous insertion into protoporphyrin IX. This Acidobacterium capsulatum (strain ATCC 51196 / DSM 11244 / BCRC 80197 / JCM 7670 / NBRC 15755 / NCIMB 13165 / 161) protein is Ferrochelatase.